The chain runs to 367 residues: Heat-inducible transcription repressor HrcA (367 aa).

This sequence belongs to the HrcA family.

Negative regulator of class I heat shock genes (grpE-dnaK-dnaJ and groELS operons). Prevents heat-shock induction of these operons. This is Heat-inducible transcription repressor HrcA from Acaryochloris marina (strain MBIC 11017).